Consider the following 259-residue polypeptide: Acetylglutamate kinase (259 aa).

Substrate-binding positions include glycine 45–glycine 46, arginine 67, and asparagine 159.

It belongs to the acetylglutamate kinase family. ArgB subfamily.

The protein localises to the cytoplasm. It carries out the reaction N-acetyl-L-glutamate + ATP = N-acetyl-L-glutamyl 5-phosphate + ADP. Its pathway is amino-acid biosynthesis; L-arginine biosynthesis; N(2)-acetyl-L-ornithine from L-glutamate: step 2/4. Functionally, catalyzes the ATP-dependent phosphorylation of N-acetyl-L-glutamate. The polypeptide is Acetylglutamate kinase (Aeromonas salmonicida (strain A449)).